The sequence spans 220 residues: Probable nicotinate-nucleotide adenylyltransferase (220 aa).

The protein belongs to the NadD family.

It carries out the reaction nicotinate beta-D-ribonucleotide + ATP + H(+) = deamido-NAD(+) + diphosphate. It functions in the pathway cofactor biosynthesis; NAD(+) biosynthesis; deamido-NAD(+) from nicotinate D-ribonucleotide: step 1/1. Catalyzes the reversible adenylation of nicotinate mononucleotide (NaMN) to nicotinic acid adenine dinucleotide (NaAD). This chain is Probable nicotinate-nucleotide adenylyltransferase, found in Laribacter hongkongensis (strain HLHK9).